Consider the following 822-residue polypeptide: Valine--tRNA ligase (822 aa).

The short motif at 41–51 is the 'HIGH' region element; sequence PNVTGQLHLGH. The short motif at 511–515 is the 'KMSKS' region element; that stretch reads KMSKS. An ATP-binding site is contributed by Lys-514. Residues 765–822 adopt a coiled-coil conformation; that stretch reads EQKGRELKEIQFLKSEILRAEKILTNKGFLEKAPREKIDLERTKLEKLKEKLAFYEKK.

It belongs to the class-I aminoacyl-tRNA synthetase family. ValS type 1 subfamily. As to quaternary structure, monomer.

It is found in the cytoplasm. The catalysed reaction is tRNA(Val) + L-valine + ATP = L-valyl-tRNA(Val) + AMP + diphosphate. Functionally, catalyzes the attachment of valine to tRNA(Val). As ValRS can inadvertently accommodate and process structurally similar amino acids such as threonine, to avoid such errors, it has a 'posttransfer' editing activity that hydrolyzes mischarged Thr-tRNA(Val) in a tRNA-dependent manner. The polypeptide is Valine--tRNA ligase (Mesomycoplasma hyopneumoniae (strain 232) (Mycoplasma hyopneumoniae)).